Consider the following 145-residue polypeptide: Small t antigen (145 aa).

The J domain maps to Arg6–Glu82. Positions Glu58–Thr80 are disordered. Positions Thr65–Glu75 are enriched in acidic residues.

Interacts with host PPP2R1A; the interaction inhibits PP2A activity.

The protein localises to the host cytoplasm. It localises to the host nucleus. Functionally, promotes efficient viral genome replication by accelerating both G1 and S phase progression of the cell cycle. This Budgerigar fledgling disease virus (BFPyV) protein is Small t antigen.